Here is a 424-residue protein sequence, read N- to C-terminus: GTPase Obg (424 aa).

The Obg domain occupies 1–158 (MFIDTAKIFV…RWIKLELKLL (158 aa)). Residues 159-331 (ADVGLIGFPN…LMKEAARLLS (173 aa)) form the OBG-type G domain. Residues 165-172 (GFPNVGKS), 190-194 (FTTLK), 212-215 (DIPG), 282-285 (NKSD), and 312-314 (SAA) contribute to the GTP site. 2 residues coordinate Mg(2+): Ser172 and Thr192. Positions 345–424 (RFIEEEKRFT…LNDFEFDFLL (80 aa)) constitute an OCT domain.

It belongs to the TRAFAC class OBG-HflX-like GTPase superfamily. OBG GTPase family. As to quaternary structure, monomer. Mg(2+) is required as a cofactor.

The protein localises to the cytoplasm. Its function is as follows. An essential GTPase which binds GTP, GDP and possibly (p)ppGpp with moderate affinity, with high nucleotide exchange rates and a fairly low GTP hydrolysis rate. Plays a role in control of the cell cycle, stress response, ribosome biogenesis and in those bacteria that undergo differentiation, in morphogenesis control. The sequence is that of GTPase Obg from Clostridium botulinum (strain ATCC 19397 / Type A).